Here is a 266-residue protein sequence, read N- to C-terminus: ATP synthase subunit a (266 aa).

A run of 5 helical transmembrane segments spans residues 28–48 (SINVDSMFFSIALGILFLVIF), 88–108 (LIAPLALTIFVWVFLMNLMDL), 141–161 (DVNITLSMALGVFILVLFYSI), 206–226 (LFGNMYAGELIFILIAGLLPW), and 237–257 (AIFHILIITLQAFIFMVLTVV).

It belongs to the ATPase A chain family. In terms of assembly, F-type ATPases have 2 components, CF(1) - the catalytic core - and CF(0) - the membrane proton channel. CF(1) has five subunits: alpha(3), beta(3), gamma(1), delta(1), epsilon(1). CF(0) has three main subunits: a(1), b(2) and c(9-12). The alpha and beta chains form an alternating ring which encloses part of the gamma chain. CF(1) is attached to CF(0) by a central stalk formed by the gamma and epsilon chains, while a peripheral stalk is formed by the delta and b chains.

Its subcellular location is the cell inner membrane. Functionally, key component of the proton channel; it plays a direct role in the translocation of protons across the membrane. The protein is ATP synthase subunit a of Pectobacterium carotovorum subsp. carotovorum (strain PC1).